The chain runs to 228 residues: Orotidine 5'-phosphate decarboxylase (228 aa).

Substrate is bound by residues Asp-11, Lys-33, 60 to 69 (DLKLHDIPNT), Thr-117, Arg-178, Gln-186, Gly-206, and Arg-207. Catalysis depends on Lys-62, which acts as the Proton donor.

It belongs to the OMP decarboxylase family. Type 1 subfamily. In terms of assembly, homodimer.

The enzyme catalyses orotidine 5'-phosphate + H(+) = UMP + CO2. Its pathway is pyrimidine metabolism; UMP biosynthesis via de novo pathway; UMP from orotate: step 2/2. Its function is as follows. Catalyzes the decarboxylation of orotidine 5'-monophosphate (OMP) to uridine 5'-monophosphate (UMP). The polypeptide is Orotidine 5'-phosphate decarboxylase (Ehrlichia canis (strain Jake)).